The following is a 91-amino-acid chain: DNA-directed RNA polymerase subunit Rpo11 (91 aa).

It belongs to the archaeal Rpo11/eukaryotic RPB11/RPC19 RNA polymerase subunit family. In terms of assembly, part of the RNA polymerase complex.

The protein resides in the cytoplasm. It carries out the reaction RNA(n) + a ribonucleoside 5'-triphosphate = RNA(n+1) + diphosphate. Its function is as follows. DNA-dependent RNA polymerase (RNAP) catalyzes the transcription of DNA into RNA using the four ribonucleoside triphosphates as substrates. This is DNA-directed RNA polymerase subunit Rpo11 from Methanothrix thermoacetophila (strain DSM 6194 / JCM 14653 / NBRC 101360 / PT) (Methanosaeta thermophila).